The chain runs to 426 residues: UDP-N-acetylglucosamine 1-carboxyvinyltransferase (426 aa).

Phosphoenolpyruvate is bound at residue 22–23 (KN). R94 lines the UDP-N-acetyl-alpha-D-glucosamine pocket. Catalysis depends on C118, which acts as the Proton donor. C118 is subject to 2-(S-cysteinyl)pyruvic acid O-phosphothioketal. Residues 123-127 (RPVDL), D310, and I332 contribute to the UDP-N-acetyl-alpha-D-glucosamine site.

It belongs to the EPSP synthase family. MurA subfamily.

Its subcellular location is the cytoplasm. The enzyme catalyses phosphoenolpyruvate + UDP-N-acetyl-alpha-D-glucosamine = UDP-N-acetyl-3-O-(1-carboxyvinyl)-alpha-D-glucosamine + phosphate. It participates in cell wall biogenesis; peptidoglycan biosynthesis. Cell wall formation. Adds enolpyruvyl to UDP-N-acetylglucosamine. The protein is UDP-N-acetylglucosamine 1-carboxyvinyltransferase of Hyphomonas neptunium (strain ATCC 15444).